The following is a 343-amino-acid chain: Ferredoxin--NADP reductase (343 aa).

FAD is bound by residues C18, D37, Q45, Y50, V90, F125, D290, and T331.

This sequence belongs to the ferredoxin--NADP reductase type 2 family. As to quaternary structure, homodimer. FAD serves as cofactor.

The enzyme catalyses 2 reduced [2Fe-2S]-[ferredoxin] + NADP(+) + H(+) = 2 oxidized [2Fe-2S]-[ferredoxin] + NADPH. The protein is Ferredoxin--NADP reductase of Parvibaculum lavamentivorans (strain DS-1 / DSM 13023 / NCIMB 13966).